We begin with the raw amino-acid sequence, 712 residues long: Methionine--tRNA ligase (712 aa).

Residues 20–30 (PYANGKAHIGH) carry the 'HIGH' region motif. Residues Cys151, Cys154, Cys163, and Cys167 each coordinate Zn(2+). The short motif at 334 to 338 (KFSKT) is the 'KMSKS' region element. Position 337 (Lys337) interacts with ATP. The disordered stretch occupies residues 559–585 (ANAKKSAAKGGEKEPSKSEGMGPSEEA). In terms of domain architecture, tRNA-binding spans 610–712 (DFAKLDIRVG…KEIKPGSRIR (103 aa)).

Belongs to the class-I aminoacyl-tRNA synthetase family. MetG type 1 subfamily. Homodimer. Zn(2+) serves as cofactor.

Its subcellular location is the cytoplasm. It catalyses the reaction tRNA(Met) + L-methionine + ATP = L-methionyl-tRNA(Met) + AMP + diphosphate. Functionally, is required not only for elongation of protein synthesis but also for the initiation of all mRNA translation through initiator tRNA(fMet) aminoacylation. The chain is Methionine--tRNA ligase from Methanosarcina acetivorans (strain ATCC 35395 / DSM 2834 / JCM 12185 / C2A).